Consider the following 571-residue polypeptide: Putative clathrin assembly protein At2g01600 (571 aa).

The ENTH domain maps to 24-161 (RVNSEYADLD…ECFRVLKYDT (138 aa)). Disordered regions lie at residues 325–346 (YRPDDGLTTEDTEPSHEEREML) and 474–571 (PAPN…TGLI). Basic and acidic residues predominate over residues 337-346 (EPSHEEREML). The segment covering 508 to 522 (QQTYQHQPQPTYQHQ) has biased composition (low complexity). Polar residues-rich tracts occupy residues 523–532 (SNPPTNNSNP) and 543–571 (PVSQQPNTSGYGDFSVNQHNNPFRSTGLI).

Its subcellular location is the membrane. It is found in the clathrin-coated pit. The protein resides in the golgi apparatus. It localises to the cytoplasmic vesicle. The protein localises to the clathrin-coated vesicle. This is Putative clathrin assembly protein At2g01600 from Arabidopsis thaliana (Mouse-ear cress).